The chain runs to 598 residues: Glutamine--fructose-6-phosphate aminotransferase [isomerizing] (598 aa).

The Nucleophile; for GATase activity role is filled by cysteine 2. The Glutamine amidotransferase type-2 domain occupies 2-219 (CGIIGYIGPR…DGEYGIVSKD (218 aa)). 2 consecutive SIS domains span residues 280–420 (VAEL…LVGI) and 449–588 (IAVK…PDRP). Lysine 593 acts as the For Fru-6P isomerization activity in catalysis.

In terms of assembly, homodimer.

The protein resides in the cytoplasm. The enzyme catalyses D-fructose 6-phosphate + L-glutamine = D-glucosamine 6-phosphate + L-glutamate. Catalyzes the first step in hexosamine metabolism, converting fructose-6P into glucosamine-6P using glutamine as a nitrogen source. The polypeptide is Glutamine--fructose-6-phosphate aminotransferase [isomerizing] (Pyrococcus horikoshii (strain ATCC 700860 / DSM 12428 / JCM 9974 / NBRC 100139 / OT-3)).